Reading from the N-terminus, the 250-residue chain is Ubiquinone/menaquinone biosynthesis C-methyltransferase UbiE (250 aa).

S-adenosyl-L-methionine is bound by residues T73, D94, 122 to 123 (NA), and S139.

Belongs to the class I-like SAM-binding methyltransferase superfamily. MenG/UbiE family.

The enzyme catalyses a 2-demethylmenaquinol + S-adenosyl-L-methionine = a menaquinol + S-adenosyl-L-homocysteine + H(+). The catalysed reaction is a 2-methoxy-6-(all-trans-polyprenyl)benzene-1,4-diol + S-adenosyl-L-methionine = a 5-methoxy-2-methyl-3-(all-trans-polyprenyl)benzene-1,4-diol + S-adenosyl-L-homocysteine + H(+). It participates in quinol/quinone metabolism; menaquinone biosynthesis; menaquinol from 1,4-dihydroxy-2-naphthoate: step 2/2. The protein operates within cofactor biosynthesis; ubiquinone biosynthesis. Its function is as follows. Methyltransferase required for the conversion of demethylmenaquinol (DMKH2) to menaquinol (MKH2) and the conversion of 2-polyprenyl-6-methoxy-1,4-benzoquinol (DDMQH2) to 2-polyprenyl-3-methyl-6-methoxy-1,4-benzoquinol (DMQH2). This is Ubiquinone/menaquinone biosynthesis C-methyltransferase UbiE from Francisella tularensis subsp. tularensis (strain WY96-3418).